The sequence spans 323 residues: Large ribosomal subunit protein uL10 (323 aa).

The disordered stretch occupies residues 296-323 (AAPAAPSAAAKEEPEESDEDDFGMGGLF). Residues 308–317 (EPEESDEDDF) show a composition bias toward acidic residues.

Belongs to the universal ribosomal protein uL10 family. As to quaternary structure, P0 forms a pentameric complex by interaction with dimers of P1 and P2. In terms of processing, phosphorylated.

Functionally, ribosomal protein P0 is the functional equivalent of E.coli protein L10. The protein is Large ribosomal subunit protein uL10 (LIPO-A) of Leishmania infantum.